We begin with the raw amino-acid sequence, 666 residues long: Kinesin-like protein Nod (666 aa).

A Kinesin motor domain is found at 8–320 (AVRIAVREAP…LRFGTSAKKL (313 aa)). 87–94 (GQTGTGKS) is a binding site for ATP. The interval 423-450 (GFHSDSDKDRHLMPPPTGQEPRQASSQN) is disordered. A coiled-coil region spans residues 639–666 (ENLFQVKSLPIWSGNKWERFCQINCLDT).

This sequence belongs to the TRAFAC class myosin-kinesin ATPase superfamily. Kinesin family. In terms of tissue distribution, in adult female, found in meiotically active ovaries.

It localises to the cytoplasm. Its subcellular location is the cytoskeleton. Functionally, required for the distributive chromosome segregation of non-exchange chromosomes during meiosis. May be a microtubule motor required to hold distributively 'paired' chromosomes at the metaphase plate until anaphase. This is Kinesin-like protein Nod (nod) from Drosophila melanogaster (Fruit fly).